The chain runs to 51 residues: Large ribosomal subunit protein eL39 (51 aa).

This sequence belongs to the eukaryotic ribosomal protein eL39 family.

In terms of biological role, binds specifically to a region in 26S rRNA near the subunit interface. The protein is Large ribosomal subunit protein eL39 (rpl39e) of Sulfolobus acidocaldarius (strain ATCC 33909 / DSM 639 / JCM 8929 / NBRC 15157 / NCIMB 11770).